The chain runs to 720 residues: Fatty acid oxidation complex subunit alpha (720 aa).

The segment at 1 to 189 (MIYQGETLSV…KLGLVDAVVA (189 aa)) is enoyl-CoA hydratase/isomerase. D296 is a binding site for substrate. The interval 311–720 (QPTKKGVVLG…ESYYTQQVNA (410 aa)) is 3-hydroxyacyl-CoA dehydrogenase. Residues M324, D343, 400 to 402 (VVE), K407, and S429 contribute to the NAD(+) site. The active-site For 3-hydroxyacyl-CoA dehydrogenase activity is the H450. N453 serves as a coordination point for NAD(+). Substrate is bound by residues N500 and Y660.

It in the N-terminal section; belongs to the enoyl-CoA hydratase/isomerase family. The protein in the C-terminal section; belongs to the 3-hydroxyacyl-CoA dehydrogenase family. In terms of assembly, heterotetramer of two alpha chains (FadB) and two beta chains (FadA).

It catalyses the reaction a (3S)-3-hydroxyacyl-CoA + NAD(+) = a 3-oxoacyl-CoA + NADH + H(+). It carries out the reaction a (3S)-3-hydroxyacyl-CoA = a (2E)-enoyl-CoA + H2O. The enzyme catalyses a 4-saturated-(3S)-3-hydroxyacyl-CoA = a (3E)-enoyl-CoA + H2O. The catalysed reaction is (3S)-3-hydroxybutanoyl-CoA = (3R)-3-hydroxybutanoyl-CoA. It catalyses the reaction a (3Z)-enoyl-CoA = a 4-saturated (2E)-enoyl-CoA. It carries out the reaction a (3E)-enoyl-CoA = a 4-saturated (2E)-enoyl-CoA. Its pathway is lipid metabolism; fatty acid beta-oxidation. Its function is as follows. Involved in the aerobic and anaerobic degradation of long-chain fatty acids via beta-oxidation cycle. Catalyzes the formation of 3-oxoacyl-CoA from enoyl-CoA via L-3-hydroxyacyl-CoA. It can also use D-3-hydroxyacyl-CoA and cis-3-enoyl-CoA as substrate. This chain is Fatty acid oxidation complex subunit alpha, found in Photobacterium profundum (strain SS9).